A 146-amino-acid chain; its full sequence is Ribonuclease H (146 aa).

Residues 1 to 141 form the RNase H type-1 domain; sequence MEKIDIFTDG…ADALANRGVE (141 aa). Mg(2+) contacts are provided by D9, E47, D69, and D133.

The protein belongs to the RNase H family. As to quaternary structure, monomer. Mg(2+) is required as a cofactor.

It is found in the cytoplasm. The catalysed reaction is Endonucleolytic cleavage to 5'-phosphomonoester.. In terms of biological role, endonuclease that specifically degrades the RNA of RNA-DNA hybrids. The polypeptide is Ribonuclease H (Herminiimonas arsenicoxydans).